The following is a 163-amino-acid chain: Cyanate hydratase (163 aa).

Residues Arg103, Glu106, and Ser129 contribute to the active site.

It belongs to the cyanase family.

It carries out the reaction cyanate + hydrogencarbonate + 3 H(+) = NH4(+) + 2 CO2. Its function is as follows. Catalyzes the reaction of cyanate with bicarbonate to produce ammonia and carbon dioxide. The chain is Cyanate hydratase from Ajellomyces capsulatus (strain G186AR / H82 / ATCC MYA-2454 / RMSCC 2432) (Darling's disease fungus).